A 718-amino-acid polypeptide reads, in one-letter code: Methionine--tRNA ligase (718 aa).

The 'HIGH' region motif lies at 12–22 (PYANGDIHLGH). Residues cysteine 143, cysteine 146, cysteine 156, and cysteine 159 each coordinate Zn(2+). A 'KMSKS' region motif is present at residues 349 to 353 (KMSKS). Residue lysine 352 coordinates ATP. Residues 573–599 (AAPAAKVASSQQRHAEKQQHEAQSAET) form a disordered region. Positions 608-718 (DFTKVDLRIA…TGAASGMRVK (111 aa)) constitute a tRNA-binding domain.

Belongs to the class-I aminoacyl-tRNA synthetase family. MetG type 1 subfamily. Homodimer. Zn(2+) serves as cofactor.

Its subcellular location is the cytoplasm. It catalyses the reaction tRNA(Met) + L-methionine + ATP = L-methionyl-tRNA(Met) + AMP + diphosphate. Is required not only for elongation of protein synthesis but also for the initiation of all mRNA translation through initiator tRNA(fMet) aminoacylation. The polypeptide is Methionine--tRNA ligase (Aromatoleum aromaticum (strain DSM 19018 / LMG 30748 / EbN1) (Azoarcus sp. (strain EbN1))).